Here is a 180-residue protein sequence, read N- to C-terminus: Large ribosomal subunit protein uL5c (180 aa).

The protein belongs to the universal ribosomal protein uL5 family. In terms of assembly, part of the 50S ribosomal subunit; contacts the 5S rRNA.

Its subcellular location is the plastid. It is found in the chloroplast. In terms of biological role, binds 5S rRNA, forms part of the central protuberance of the 50S subunit. This is Large ribosomal subunit protein uL5c (rpl5) from Tetradesmus obliquus (Green alga).